The following is a 99-amino-acid chain: Large ribosomal subunit protein P1 (99 aa).

In terms of assembly, part of the 50S ribosomal subunit. Homodimer, it forms part of the ribosomal stalk which helps the ribosome interact with GTP-bound translation factors. Forms both a pentameric uL10/P0(P1)2(P1)2 and heptameric uL10/P0(P1)2(P1)2(P1)2 complex, where uL10/P0 forms an elongated spine to which the P1 dimers bind in a sequential fashion. The proportion of heptameric complexes increases during cell growth.

Functionally, forms part of the ribosomal stalk, playing a central role in the interaction of the ribosome with GTP-bound translation factors. The sequence is that of Large ribosomal subunit protein P1 from Methanococcus vannielii.